A 758-amino-acid chain; its full sequence is Probable serine/threonine-protein kinase HAL5-like (758 aa).

Disordered stretches follow at residues 1-170 and 189-252; these read MGTV…SADD and IDNA…HRGR. The span at 22-57 shows a compositional bias: polar residues; sequence RSISGSIKSLFKPSSVQNSTPTVSPHESSPPLGNSD. Basic and acidic residues predominate over residues 58–69; it reads NLKKLVDTKRAE. A compositionally biased stretch (low complexity) spans 129 to 153; the sequence is SSPRQSSSTNDRSSITSATSSVTSA. The span at 216 to 226 shows a compositional bias: basic and acidic residues; it reads DKNFESSEYEI. The segment covering 227–247 has biased composition (polar residues); it reads RSNSLSRIHSTPQNESPTVNN. Residues 442–744 form the Protein kinase domain; the sequence is KSMGVVLGHG…IDQLLQSPWM (303 aa). ATP-binding positions include 448–456 and Lys485; that span reads LGHGAYGVV. The Proton acceptor role is filled by Asp595.

Belongs to the protein kinase superfamily. CAMK Ser/Thr protein kinase family. NPR/HAL subfamily. HAL5 sub-subfamily.

It carries out the reaction L-seryl-[protein] + ATP = O-phospho-L-seryl-[protein] + ADP + H(+). The catalysed reaction is L-threonyl-[protein] + ATP = O-phospho-L-threonyl-[protein] + ADP + H(+). The chain is Probable serine/threonine-protein kinase HAL5-like from Vanderwaltozyma polyspora (strain ATCC 22028 / DSM 70294 / BCRC 21397 / CBS 2163 / NBRC 10782 / NRRL Y-8283 / UCD 57-17) (Kluyveromyces polysporus).